The chain runs to 276 residues: uncharacterized protein (276 aa).

In terms of domain architecture, AB hydrolase-1 spans 20-137; sequence PVLIFIPGAN…PPINTFLPDS (118 aa). Residues 57 to 76 are disordered; the sequence is GESELTEPLPDSASNPDSDY.

This sequence belongs to the AB hydrolase superfamily.

This is an uncharacterized protein from Staphylococcus aureus (strain MW2).